The chain runs to 158 residues: G-protein-signaling modulator 3 (158 aa).

The disordered stretch occupies residues 1-53 (MEAERPQEDGEQSLPQDDQGWPPVNSTARPWRSAPPSPPPPGTRHTALGPRSG). Phosphoserine is present on residues Ser33 and Ser37. Positions 33–42 (SAPPSPPPPG) are enriched in pro residues. Over residues 43–53 (TRHTALGPRSG) the composition is skewed to low complexity. Phosphoserine is present on residues Ser54 and Ser57. The residue at position 60 (Thr60) is a Phosphothreonine. The 23-residue stretch at 60–82 (TELLLDLVAEAQSRRLEEQRAAF) folds into the GoLoco 1 domain. Residues 78–97 (QRAAFHTPKVPPSLAPTPPR) are disordered. Over residues 86–96 (KVPPSLAPTPP) the composition is skewed to pro residues. 2 GoLoco domains span residues 102–124 (KEQL…RSDP) and 130–153 (GQEL…RSRP).

The protein resides in the cytoplasm. Functionally, interacts with subunit of G(i) alpha proteins and regulates the activation of G(i) alpha proteins. The chain is G-protein-signaling modulator 3 (Gpsm3) from Rattus norvegicus (Rat).